The chain runs to 146 residues: MLVLIQRVSQAAVHVDDEAVGQIGPGLLALVGMEPGDTEAQLRRMAERLLGYRVFADEAGKMNRSLRDTGGGLLLVSQFTLAADTRSGMRPSFTTAAPPEEAERGFNRFVEICRENHAPGVETGRFGAHMVVSLVNDGPVTFLLRP.

The Gly-cisPro motif, important for rejection of L-amino acids motif lies at 138–139 (GP).

Belongs to the DTD family. In terms of assembly, homodimer.

Its subcellular location is the cytoplasm. It catalyses the reaction glycyl-tRNA(Ala) + H2O = tRNA(Ala) + glycine + H(+). The catalysed reaction is a D-aminoacyl-tRNA + H2O = a tRNA + a D-alpha-amino acid + H(+). Functionally, an aminoacyl-tRNA editing enzyme that deacylates mischarged D-aminoacyl-tRNAs. Also deacylates mischarged glycyl-tRNA(Ala), protecting cells against glycine mischarging by AlaRS. Acts via tRNA-based rather than protein-based catalysis; rejects L-amino acids rather than detecting D-amino acids in the active site. By recycling D-aminoacyl-tRNA to D-amino acids and free tRNA molecules, this enzyme counteracts the toxicity associated with the formation of D-aminoacyl-tRNA entities in vivo and helps enforce protein L-homochirality. The polypeptide is D-aminoacyl-tRNA deacylase (Stenotrophomonas maltophilia (strain K279a)).